A 392-amino-acid polypeptide reads, in one-letter code: Glycerophosphodiester phosphodiesterase GDPD5 (392 aa).

The N-terminal stretch at 1–21 is a signal peptide; sequence MILTRCLPLIWLSLLTVCAAG. One can recognise a GP-PDE domain in the interval 44-362; sequence PYNIAHRGSN…DFTGSLHNFQ (319 aa). N-linked (GlcNAc...) asparagine glycosylation is found at asparagine 120, asparagine 239, asparagine 260, and asparagine 329.

Belongs to the glycerophosphoryl diester phosphodiesterase family. As to expression, expressed in roots, rosette and cauline leaves, stems, flowers and siliques.

It is found in the secreted. The protein resides in the cell wall. Its subcellular location is the vacuole. The enzyme catalyses a sn-glycero-3-phosphodiester + H2O = an alcohol + sn-glycerol 3-phosphate + H(+). The chain is Glycerophosphodiester phosphodiesterase GDPD5 from Arabidopsis thaliana (Mouse-ear cress).